Reading from the N-terminus, the 50-residue chain is Sproutin (50 aa).

Ser-8 is modified (phosphoserine; by PKC).

Brain.

In terms of biological role, neurite outgrowth factor. The sequence is that of Sproutin from Rattus norvegicus (Rat).